The primary structure comprises 469 residues: Argininosuccinate lyase (469 aa).

This sequence belongs to the lyase 1 family. Argininosuccinate lyase subfamily.

The protein localises to the cytoplasm. The enzyme catalyses 2-(N(omega)-L-arginino)succinate = fumarate + L-arginine. It functions in the pathway amino-acid biosynthesis; L-arginine biosynthesis; L-arginine from L-ornithine and carbamoyl phosphate: step 3/3. In Novosphingobium aromaticivorans (strain ATCC 700278 / DSM 12444 / CCUG 56034 / CIP 105152 / NBRC 16084 / F199), this protein is Argininosuccinate lyase.